The sequence spans 68 residues: Copper transport protein ATOX1 (68 aa).

The 63-residue stretch at 1–63 folds into the HMA domain; the sequence is MPKHEFSVDM…TLNKTGKAVS (63 aa). Cys-12 and Cys-15 together coordinate Cu cation. A Phosphoserine modification is found at Ser-47. Lys-60 carries the N6-acetyllysine modification.

It belongs to the ATX1 family. Homodimer. Interacts with ATP7B. Interacts with ATP7A. Interacts (via dimer form) with SLC31A1 (via C-terminal domain); this interaction improves ATOX1 stability and controls intracellular Cu(I) levels.

Binds and deliver cytosolic copper to the copper ATPase proteins. May be important in cellular antioxidant defense. This is Copper transport protein ATOX1 from Rattus norvegicus (Rat).